Consider the following 399-residue polypeptide: Transcription factor UNE10 (399 aa).

Disordered regions lie at residues 119–158 (QSKP…GSQR) and 173–228 (MGSH…RRDK). The segment covering 178–201 (NTIDDHDSVCHSRPQMEDEEEKKA) has biased composition (basic and acidic residues). The 50-residue stretch at 213–262 (RAAAIHNQSERKRRDKINQRMKTLQKLVPNSSKTDKASMLDEVIEYLKQL) folds into the bHLH domain.

As to quaternary structure, homodimer. Associates to PTAC12/HMR/PAP5 which acts as a transcriptional coactivator. Interacts with the Pfr form of phyB but barely with that of phyA. Binds to COP1. In terms of processing, ubiquitinated and subsequently targeted to protein degradation by COP1 in the dark, but not in far-red light. Mainly expressed in stems, leaves, seedlings, fruits and flowers, and, to a lower extent, in roots.

The protein resides in the nucleus. Its activity is regulated as follows. Stabilized by phyA but destabilized by phyB. Accumulates in the dark but not in far-red light upon MG132 treatment, a 26S proteasome inhibitor (at protein level). In terms of biological role, transcription factor binding to G-box elements (5'-CACGTG-3') in target genes promoters, particularly in far-red light but barely in the dark. Required during the fertilization of ovules by pollen. Repressor of phytochrome A-mediated far-red light responses including seed germination, suppression of hypocotyl elongation, and randomization of hypocotyl growth orientation. Does not inhibit phyB-induced red light responses. In Arabidopsis thaliana (Mouse-ear cress), this protein is Transcription factor UNE10.